A 386-amino-acid polypeptide reads, in one-letter code: Succinate--CoA ligase [ADP-forming] subunit beta (386 aa).

The region spanning 9–244 (KAVLRSYGVS…LDEEDAKEIE (236 aa)) is the ATP-grasp domain. ATP is bound by residues lysine 46, 53 to 55 (GRG), glutamate 99, cysteine 102, and glutamate 107. Asparagine 199 and aspartate 213 together coordinate Mg(2+). Substrate contacts are provided by residues asparagine 264 and 321-323 (GIM).

It belongs to the succinate/malate CoA ligase beta subunit family. As to quaternary structure, heterotetramer of two alpha and two beta subunits. Requires Mg(2+) as cofactor.

It catalyses the reaction succinate + ATP + CoA = succinyl-CoA + ADP + phosphate. The enzyme catalyses GTP + succinate + CoA = succinyl-CoA + GDP + phosphate. The protein operates within carbohydrate metabolism; tricarboxylic acid cycle; succinate from succinyl-CoA (ligase route): step 1/1. In terms of biological role, succinyl-CoA synthetase functions in the citric acid cycle (TCA), coupling the hydrolysis of succinyl-CoA to the synthesis of either ATP or GTP and thus represents the only step of substrate-level phosphorylation in the TCA. The beta subunit provides nucleotide specificity of the enzyme and binds the substrate succinate, while the binding sites for coenzyme A and phosphate are found in the alpha subunit. The protein is Succinate--CoA ligase [ADP-forming] subunit beta of Bacillus thuringiensis (strain Al Hakam).